The sequence spans 496 residues: Probable cytosol aminopeptidase (496 aa).

Residues Lys-258 and Asp-263 each contribute to the Mn(2+) site. Lys-270 is a catalytic residue. Residues Asp-281, Asp-340, and Glu-342 each contribute to the Mn(2+) site. The active site involves Arg-344.

Belongs to the peptidase M17 family. Mn(2+) is required as a cofactor.

The protein localises to the cytoplasm. It carries out the reaction Release of an N-terminal amino acid, Xaa-|-Yaa-, in which Xaa is preferably Leu, but may be other amino acids including Pro although not Arg or Lys, and Yaa may be Pro. Amino acid amides and methyl esters are also readily hydrolyzed, but rates on arylamides are exceedingly low.. The catalysed reaction is Release of an N-terminal amino acid, preferentially leucine, but not glutamic or aspartic acids.. In terms of biological role, presumably involved in the processing and regular turnover of intracellular proteins. Catalyzes the removal of unsubstituted N-terminal amino acids from various peptides. The sequence is that of Probable cytosol aminopeptidase from Helicobacter pylori (strain P12).